The primary structure comprises 280 residues: Ribosomal RNA large subunit methyltransferase J (280 aa).

S-adenosyl-L-methionine contacts are provided by residues H19, H42, S100, E118, 143 to 144, and D164; that span reads DG. D164 serves as the catalytic Proton acceptor.

This sequence belongs to the RlmJ family. Monomer.

It carries out the reaction adenosine(2030) in 23S rRNA + S-adenosyl-L-methionine = N(6)-methyladenosine(2030) in 23S rRNA + S-adenosyl-L-homocysteine + H(+). Functionally, specifically methylates the adenine in position 2030 of 23S rRNA. Nascent 23S rRNA seems to be the natural substrate. Appears to be not necessary for ribosome assembly. Required for the utilization of extracellular DNA as the sole source of carbon and energy. In Escherichia coli (strain K12), this protein is Ribosomal RNA large subunit methyltransferase J.